The following is a 315-amino-acid chain: Transaldolase (315 aa).

Lysine 128 acts as the Schiff-base intermediate with substrate in catalysis.

This sequence belongs to the transaldolase family. Type 1 subfamily. In terms of assembly, homodimer.

The protein resides in the cytoplasm. It carries out the reaction D-sedoheptulose 7-phosphate + D-glyceraldehyde 3-phosphate = D-erythrose 4-phosphate + beta-D-fructose 6-phosphate. It participates in carbohydrate degradation; pentose phosphate pathway; D-glyceraldehyde 3-phosphate and beta-D-fructose 6-phosphate from D-ribose 5-phosphate and D-xylulose 5-phosphate (non-oxidative stage): step 2/3. In terms of biological role, transaldolase is important for the balance of metabolites in the pentose-phosphate pathway. This Opitutus terrae (strain DSM 11246 / JCM 15787 / PB90-1) protein is Transaldolase.